The following is a 738-amino-acid chain: Glycogen [starch] synthase, muscle (738 aa).

A Phosphoserine; by AMPK and PKA modification is found at serine 8. Residue serine 11 is modified to Phosphoserine. Position 39 (lysine 39) interacts with UDP. Positions 205 and 211 each coordinate UDP-alpha-D-glucose. 5 residues coordinate alpha-D-glucose 6-phosphate: histidine 291, glutamate 292, glutamine 294, histidine 297, and lysine 301. Arginine 331 lines the UDP pocket. Arginine 331 is a UDP-alpha-D-glucose binding site. The residue at position 412 (serine 412) is a Phosphoserine. Histidine 501 contacts alpha-D-glucose 6-phosphate. UDP-alpha-D-glucose-binding residues include glutamate 510, tryptophan 512, and glycine 513. Threonine 515 contributes to the UDP binding site. Alpha-D-glucose 6-phosphate-binding residues include arginine 582 and arginine 586. The tract at residues 632 to 738 is disordered; it reads QGYRYPRPAS…PTSSLGEERN (107 aa). Serine 641 bears the Phosphoserine; by DYRK2, GSK3-alpha, GSK3-beta and PASK mark. A phosphoserine mark is found at serine 645, serine 649, serine 652, serine 653, serine 657, and serine 672. Positions 658 to 681 are enriched in acidic residues; the sequence is EDEEEPRDGPLGEDSERYDEEEEA. The span at 682 to 695 shows a compositional bias: basic and acidic residues; the sequence is AKDRRNIRAPEWPR. A phosphoserine mark is found at serine 698, serine 709, and serine 711. Residues 698–738 are compositionally biased toward low complexity; the sequence is SCSSSTGGSKRSNSVDTGPSSSLSTPTEPLSPTSSLGEERN. A phosphothreonine mark is found at threonine 722 and threonine 724. Serine 728 and serine 732 each carry phosphoserine.

Belongs to the glycosyltransferase 3 family. In terms of assembly, part of the GYS1-GYG1 complex, a heterooctamer composed of a tetramer of GYS1 and 2 dimers of GYG1, where each GYS1 protomer binds to one GYG1 subunit (via GYG1 C-terminus); the GYS1 tetramer may dissociate from GYG1 dimers to continue glycogen polymerization on its own. Post-translationally, primed phosphorylation at Ser-657 (site 5) by CSNK2A1 and CSNK2A2 is required for inhibitory phosphorylation at Ser-641 (site 3a), Ser-645 (site 3b), Ser-649 (site 3c) and Ser-653 (site 4) by GSK3A an GSK3B. Phosphorylated at Ser-641 by PASK, leading to inactivation; phosphorylation by PASK is inhibited by glycogen. Phosphorylated at Ser-641 by DYRK2, leading to inactivation. Dephosphorylation at Ser-641 and Ser-645 by PP1 activates the enzyme. Phosphorylation at Ser-8 by AMPK inactivates the enzyme activity.

It carries out the reaction [(1-&gt;4)-alpha-D-glucosyl](n) + UDP-alpha-D-glucose = [(1-&gt;4)-alpha-D-glucosyl](n+1) + UDP + H(+). Its pathway is glycan biosynthesis; glycogen biosynthesis. Its activity is regulated as follows. Allosteric activation by glucose-6-phosphate. Phosphorylation reduces the activity towards UDP-glucose. When in the non-phosphorylated state, glycogen synthase does not require glucose-6-phosphate as an allosteric activator; when phosphorylated it does. Glycogen synthase participates in the glycogen biosynthetic process along with glycogenin and glycogen branching enzyme. Extends the primer composed of a few glucose units formed by glycogenin by adding new glucose units to it. In this context, glycogen synthase transfers the glycosyl residue from UDP-Glc to the non-reducing end of alpha-1,4-glucan. In Mus musculus (Mouse), this protein is Glycogen [starch] synthase, muscle (Gys1).